Reading from the N-terminus, the 325-residue chain is Probable 2-ketogluconate reductase (325 aa).

NAD(+)-binding positions include 158–159 (RI), Thr211, 238–240 (ISR), and Asp264. The active site involves Arg240. Residue Glu269 is part of the active site. The active-site Proton donor is the His288. An NAD(+)-binding site is contributed by 288-291 (HIGS).

Belongs to the D-isomer specific 2-hydroxyacid dehydrogenase family.

It carries out the reaction D-gluconate + NADP(+) = 2-dehydro-D-gluconate + NADPH + H(+). The polypeptide is Probable 2-ketogluconate reductase (yvcT) (Bacillus subtilis (strain 168)).